We begin with the raw amino-acid sequence, 392 residues long: Formate-dependent phosphoribosylglycinamide formyltransferase (392 aa).

N(1)-(5-phospho-beta-D-ribosyl)glycinamide is bound by residues 20–21 (EL) and glutamate 80. ATP is bound by residues arginine 112, lysine 153, 158–163 (SSGKGQ), 193–196 (EGFV), and glutamate 201. One can recognise an ATP-grasp domain in the interval 117–306 (RLAAEELGLP…EFALHVRAIL (190 aa)). Mg(2+) contacts are provided by glutamate 265 and glutamate 277. N(1)-(5-phospho-beta-D-ribosyl)glycinamide-binding positions include aspartate 284, lysine 355, and 362-363 (RR).

The protein belongs to the PurK/PurT family. In terms of assembly, homodimer.

The catalysed reaction is N(1)-(5-phospho-beta-D-ribosyl)glycinamide + formate + ATP = N(2)-formyl-N(1)-(5-phospho-beta-D-ribosyl)glycinamide + ADP + phosphate + H(+). The protein operates within purine metabolism; IMP biosynthesis via de novo pathway; N(2)-formyl-N(1)-(5-phospho-D-ribosyl)glycinamide from N(1)-(5-phospho-D-ribosyl)glycinamide (formate route): step 1/1. Involved in the de novo purine biosynthesis. Catalyzes the transfer of formate to 5-phospho-ribosyl-glycinamide (GAR), producing 5-phospho-ribosyl-N-formylglycinamide (FGAR). Formate is provided by PurU via hydrolysis of 10-formyl-tetrahydrofolate. This is Formate-dependent phosphoribosylglycinamide formyltransferase from Aeromonas salmonicida (strain A449).